The following is a 220-amino-acid chain: Splicing factor U2AF 26 kDa subunit (220 aa).

Ala-2 is subject to N-acetylalanine. The C3H1-type 1 zinc finger occupies Glu-12–Pro-40. Residues Ser-65–Val-147 form the RRM domain. A C3H1-type 2 zinc finger spans residues Asp-149–Pro-176. Residues Tyr-186–Phe-220 are disordered. Residues Gly-189–Phe-220 are compositionally biased toward basic residues.

This sequence belongs to the splicing factor SR family. In terms of assembly, interacts with GFI1, U2AF2 and C1QBP.

Its subcellular location is the nucleus. The protein resides in the nucleus speckle. It localises to the cytoplasm. Functionally, RNA-binding protein that function as a pre-mRNA splicing factor. Plays a critical role in both constitutive and enhancer-dependent splicing by mediating protein-protein interactions and protein-RNA interactions required for accurate 3'-splice site selection. Acts by enhancing the binding of U2AF2 to weak pyrimidine tracts. Also participates in the regulation of alternative pre-mRNA splicing. Activates exon 5 skipping of PTPRC during T-cell activation; an event reversed by GFI1. Binds to RNA at the AG dinucleotide at the 3'-splice site. Shows a preference for AGC or AGA. This is Splicing factor U2AF 26 kDa subunit (U2AF1L4) from Bos taurus (Bovine).